The sequence spans 339 residues: MVREEVAGSTQTLQWKCVESRVDSKRLYYGRFILSPLRKGQADTVGIALRRALLGEIEGTCITRAKFGSVPHEYSTIAGIEESVQEILLNLKEIVLRSNLYGVRDASICVKGPRYITAQDIILPPSVEIVDTAQPIANLXEPIDFCIDLQIKRDRGYQTELRKNYQDGSYPIDAVSMPVRNVNYSIFSCGNGNEKHEILFLEIWTNGSLTPKEALYEASRNLIDLFLPFLHAEEEGASFEENKNRFTPPLFTFQKRLTNLKKNKKGIPLNCIFIDQLELTSRTYNCLKRANIHTLLDLLSKTEEDLLRIDXFRMEDRKHIWDTLEKHLPIDLLKNKLSF.

The alpha N-terminal domain (alpha-NTD) stretch occupies residues 1 to 233 (MVREEVAGST…DLFLPFLHAE (233 aa)). Positions 264 to 339 (KKGIPLNCIF…IDLLKNKLSF (76 aa)) are alpha C-terminal domain (alpha-CTD).

This sequence belongs to the RNA polymerase alpha chain family. In terms of assembly, in plastids the minimal PEP RNA polymerase catalytic core is composed of four subunits: alpha, beta, beta', and beta''. When a (nuclear-encoded) sigma factor is associated with the core the holoenzyme is formed, which can initiate transcription.

It is found in the plastid. The protein localises to the chloroplast. It catalyses the reaction RNA(n) + a ribonucleoside 5'-triphosphate = RNA(n+1) + diphosphate. In terms of biological role, DNA-dependent RNA polymerase catalyzes the transcription of DNA into RNA using the four ribonucleoside triphosphates as substrates. This is DNA-directed RNA polymerase subunit alpha from Secale strictum (Mountain rye).